The sequence spans 511 residues: ATP synthase subunit alpha (511 aa).

170 to 177 (GDRQTGKT) contacts ATP.

The protein belongs to the ATPase alpha/beta chains family. As to quaternary structure, F-type ATPases have 2 components, CF(1) - the catalytic core - and CF(0) - the membrane proton channel. CF(1) has five subunits: alpha(3), beta(3), gamma(1), delta(1), epsilon(1). CF(0) has three main subunits: a(1), b(2) and c(9-12). The alpha and beta chains form an alternating ring which encloses part of the gamma chain. CF(1) is attached to CF(0) by a central stalk formed by the gamma and epsilon chains, while a peripheral stalk is formed by the delta and b chains.

Its subcellular location is the cell inner membrane. It carries out the reaction ATP + H2O + 4 H(+)(in) = ADP + phosphate + 5 H(+)(out). In terms of biological role, produces ATP from ADP in the presence of a proton gradient across the membrane. The alpha chain is a regulatory subunit. In Granulibacter bethesdensis (strain ATCC BAA-1260 / CGDNIH1), this protein is ATP synthase subunit alpha.